The primary structure comprises 931 residues: MNTGDTPCKTSLRVTTWVDRSLHHLKLQTEFCMNMANRSHSQYHITPQDHDEDARGYLLNEPPAHGYDHDRLGVGTPPDRPVSAYSLTESYAPNASQLPPAGSGGFGDNGFGQYGQPQGFGGPYDRPLSAVHDEEESWMQRQQQPGGVGQAGGLRRYNTRKVKLVQGSVLSIDYPVPSAIKNAVQPRYRDVEGGNEEFMKMRYTAATCDPNDFTLKNGYDLRPRMYNRHTELLIAITYYNEDKVLLSRTLHGVMQNIRDIVNLKKSTFWNKGGPAWQKIVVCLVFDGIEKADKNTLDVLATVGVYQDGVIKKDVDGKETVAHIFEYTSQLSVTPSQQLIRPTGDSPQNLPPVQFIFCLKQKNSKKINSHRWLFNAFGRILNPEVTILIDAGTKPSPRSLLALWEGFYNDKDLGGACGEIHAMLGKGGKKLFNPLVAVQNFEYKISNILDKPLESSFGYVSVLPGAFSAYRFRAIMGRPLEQYFHGDHTLSKILGKKGIDGMNIFKKNMFLAEDRILCFELVAKAGQKWHLTYIKAAKGETDVPEGAAEFISQRRRWLNGSFAASLYSLMHFGRLYKSGHNIVRMFFLHIQVIYNVLNVIFSWFSLASYYLTTTVIMDLVGTPVVASSSAAEHHGWPFGDTATPIINALLKYLYLAFVILQFILALGNRPKGSKFTYIASFMVFGLIQGYILVLSGYLVARAFQQPISEQIKLDSSEDFVRSFFSGSSAGGVILIALITIYGLYFVASFLYLDPWHMFHSFPYYMLLMSTYINILMVYAFNNWHDVSWGTKGSDKAEALPSANVTKSEKNEVVVEEIEKEQEDIDSQFEQTVRRALAPFKEVEEIEKKDVEDSYKSFRTGLVVSWLFSNILLVVIITSDNFNSFGIGKSASVRTANFFKFLLYATAALSIVRFIGFLWFLGKTGLMCCFARR.

2 N-linked (GlcNAc...) asparagine glycosylation sites follow: Asn37 and Asn94. The interval 93–154 (PNASQLPPAG…PGGVGQAGGL (62 aa)) is disordered. The segment covering 102–122 (GSGGFGDNGFGQYGQPQGFGG) has biased composition (gly residues). Asn558 is a glycosylation site (N-linked (GlcNAc...) asparagine). 5 helical membrane-spanning segments follow: residues 585–605 (FFLH…WFSL), 644–664 (IINA…FILA), 677–697 (IASF…SGYL), 731–751 (VILI…FLYL), and 759–779 (SFPY…VYAF). An N-linked (GlcNAc...) asparagine glycan is attached at Asn802. 2 helical membrane-spanning segments follow: residues 858–878 (TGLV…ITSD) and 899–919 (FLLY…LWFL).

It belongs to the chitin synthase family. Class III subfamily. In terms of tissue distribution, highly expressed in conidia and during appressorium formation.

It localises to the cell membrane. It carries out the reaction [(1-&gt;4)-N-acetyl-beta-D-glucosaminyl](n) + UDP-N-acetyl-alpha-D-glucosamine = [(1-&gt;4)-N-acetyl-beta-D-glucosaminyl](n+1) + UDP + H(+). In terms of biological role, polymerizes chitin, a structural polymer of the cell wall and septum, by transferring the sugar moiety of UDP-GlcNAc to the non-reducing end of the growing chitin polymer. Contributes to the production of conidia and the ability of fungal conidia to germinate. Involved in the fungal cell wall integrity and the ability of conidia to withstand biophysical pressure. Required for appressorium formation and evasion of insect cellular and/or humoral defenses, promoting the fungal dimorphic transition to the production of hyphal bodies that occurs within hosts, and ultimately to virulence. The polypeptide is Chitin synthase III (Metarhizium acridum (strain CQMa 102)).